We begin with the raw amino-acid sequence, 461 residues long: Asparagine--tRNA ligase (461 aa).

The protein belongs to the class-II aminoacyl-tRNA synthetase family. As to quaternary structure, homodimer.

It localises to the cytoplasm. The enzyme catalyses tRNA(Asn) + L-asparagine + ATP = L-asparaginyl-tRNA(Asn) + AMP + diphosphate + H(+). The polypeptide is Asparagine--tRNA ligase (Geobacter metallireducens (strain ATCC 53774 / DSM 7210 / GS-15)).